The primary structure comprises 1088 residues: Protocadherin-19 (1088 aa).

The signal sequence occupies residues 1 to 24 (MHSKDMDFVQMFVCFLLCWTGVDA). At 25–678 (VFNLKYTVEE…QEQIGPVNLS (654 aa)) the chain is on the extracellular side. 6 consecutive Cadherin domains span residues 31–130 (TVEE…APRF), 131–239 (PTNH…NPVF), 240–347 (DEPV…APEI), 351–454 (SENS…PPYF), 455–563 (TKPH…TPVM), and 569–676 (VNGT…GPVN). Residues E34 and E35 each contribute to the Ca(2+) site. Residue N44 is glycosylated (N-linked (GlcNAc...) asparagine). Ca(2+) is bound by residues D89 and D91. Residues C94 and C100 are joined by a disulfide bond. Ca(2+) is bound by residues D122, V123, N124, D125, N126, E141, D156, D158, N162, E200, D213, D231, S232, N233, D234, N235, and E250. N262 is a glycosylation site (N-linked (GlcNAc...) asparagine). D265, D267, and N271 together coordinate Ca(2+). A glycan (N-linked (GlcNAc...) asparagine) is linked at N284. D306, E308, D339, I340, N341, D342, N343, E361, and D376 together coordinate Ca(2+). N-linked (GlcNAc...) asparagine glycosylation is present at N377. Ca(2+) is bound by residues D378, N382, D413, and E415. N421 carries an N-linked (GlcNAc...) asparagine glycan. Ca(2+) contacts are provided by D428, D446, E447, N448, D449, N450, E465, D480, D482, N486, N522, E524, and D537. N-linked (GlcNAc...) asparagine glycosylation is present at N486. N-linked (GlcNAc...) asparagine glycosylation occurs at N546. Ca(2+) is bound by residues D555, V556, N557, D558, and N559. N570 is a glycosylation site (N-linked (GlcNAc...) asparagine). Residues D594, D596, N600, and D646 each coordinate Ca(2+). An N-linked (GlcNAc...) asparagine glycan is attached at N676. A helical membrane pass occupies residues 679–699 (LIFIIALGSIAVILFVTMIFV). Residues 700 to 1088 (AVKCKRDNKE…GSKRLKDIVL (389 aa)) lie on the Cytoplasmic side of the membrane. 4 disordered regions span residues 792-813 (NSRNAAPNHGYHHTFTGQGPQQ), 851-875 (DMEGNSLKDSGHEESDQTDSEHDVQ), 970-1032 (TFGK…ASST), and 1067-1088 (TLLQDGRDKESPGSKRLKDIVL). A compositionally biased stretch (basic and acidic residues) spans 859–875 (DSGHEESDQTDSEHDVQ). Residues 1071–1088 (DGRDKESPGSKRLKDIVL) are compositionally biased toward basic and acidic residues.

As to quaternary structure, homodimer; antiparallel. Interacts with cadherin cdh2; the interaction confers robust cell adhesion activity on pcdh19. As to expression, in the embryo, strongly expressed in the developing nervous system. At 12 hours post fertilization (hpf), shows a segmental expression pattern in the anterior third of the neural keel with strong expression in the presumptive forebrain, cerebellum/rhombomere 1 and rhombomere 4. By 24 hpf, expressed widely in the brain and spinal cord with higher expression levels in the ventral telencephalon, dorsal and central thalamus, optic tectum, central tegmentum, cerebellum and dorsolateral regions of the hindbrain. As development proceeds, expression becomes restricted to the dorsal and/or lateral regions of the central nervous system. Not detected in the spinal cord of two- and three-day old embryos. Expressed in the eye primordium, developing retina, lens and otic vesicle. Expressed in the larval optic tectum at 4 days post-fertilization where it localizes in discrete columns of neurons. Expressed throughout the adult brain with strong expression in the ventromedial telencephalon, periventricular regions of the thalamus and anterior hypothalamus, stratum periventriculare of the optic tectum, dorsal tegmental nucleus, granular regions of the cerebellar body and valvula, and superficial layers of the facial and vagal lobes.

The protein localises to the cell membrane. Calcium-dependent cell-adhesion protein. Essential for the early stages of neurulation in the anterior neural plate. Shows little cell adhesion activity on its own but exhibits robust homophilic cell adhesion when in a complex with cadherin cdh2 and appears to mediate the adhesion while cdh2 acts as a cell adhesion cofactor in the complex. Functions with cdh2 to coordinate cell adhesion and cell movements during neurulation. Contributes to neural progenitor cell patterning with cdh2 by promoting homophilic cell interactions. Regulates the columnar organization of neurons in the optic tectum. This is Protocadherin-19 from Danio rerio (Zebrafish).